A 412-amino-acid polypeptide reads, in one-letter code: uncharacterized protein (412 aa).

Positions 20–199 (FFYFDFDAFF…LPIVELPGIG (180 aa)) constitute a UmuC domain.

This sequence belongs to the DNA polymerase type-Y family.

This is an uncharacterized protein from Mycoplasma pneumoniae (strain ATCC 29342 / M129 / Subtype 1) (Mycoplasmoides pneumoniae).